Reading from the N-terminus, the 538-residue chain is Cytochrome P450 monooxygenase astC (538 aa).

Residues 18–38 (ALMLPALVGCALLIYRAFFAI) traverse the membrane as a helical segment. Residue C481 coordinates heme.

The protein belongs to the cytochrome P450 family. Heme is required as a cofactor.

It localises to the membrane. The protein operates within secondary metabolite biosynthesis; terpenoid biosynthesis. Its function is as follows. Cytochrome P450 monooxygenase; part of the gene cluster that mediates the biosynthesis of the sesquiterpenoid aspterric acid (AA), an inhibitor of dihydroxy-acid dehydratase (DHAD) effective as an herbicide. AstC catalyzes the third and last step within the pathway and converts the alpha-epoxy carboxylate intermediate produced by the cytochrome P450 monooxygenase astC from (-)daucane into the tricyclic aspterric acid. The sequence is that of Cytochrome P450 monooxygenase astC from Aspergillus terreus (strain NIH 2624 / FGSC A1156).